The following is a 308-amino-acid chain: Glutaminase (308 aa).

Positions 68, 118, 162, 169, 193, 244, and 262 each coordinate substrate.

It belongs to the glutaminase family. Homotetramer.

The enzyme catalyses L-glutamine + H2O = L-glutamate + NH4(+). This chain is Glutaminase, found in Hahella chejuensis (strain KCTC 2396).